We begin with the raw amino-acid sequence, 250 residues long: Large ribosomal subunit protein uL30B (250 aa).

It belongs to the universal ribosomal protein uL30 family. As to quaternary structure, component of the large ribosomal subunit (LSU). Mature yeast ribosomes consist of a small (40S) and a large (60S) subunit. The 40S small subunit contains 1 molecule of ribosomal RNA (18S rRNA) and at least 33 different proteins. The large 60S subunit contains 3 rRNA molecules (25S, 5.8S and 5S rRNA) and at least 46 different proteins.

It localises to the cytoplasm. It is found in the nucleus. The protein localises to the nucleolus. In terms of biological role, component of the ribosome, a large ribonucleoprotein complex responsible for the synthesis of proteins in the cell. The small ribosomal subunit (SSU) binds messenger RNAs (mRNAs) and translates the encoded message by selecting cognate aminoacyl-transfer RNA (tRNA) molecules. The large subunit (LSU) contains the ribosomal catalytic site termed the peptidyl transferase center (PTC), which catalyzes the formation of peptide bonds, thereby polymerizing the amino acids delivered by tRNAs into a polypeptide chain. The nascent polypeptides leave the ribosome through a tunnel in the LSU and interact with protein factors that function in enzymatic processing, targeting, and the membrane insertion of nascent chains at the exit of the ribosomal tunnel. The chain is Large ribosomal subunit protein uL30B (rpl702) from Schizosaccharomyces pombe (strain 972 / ATCC 24843) (Fission yeast).